The following is a 364-amino-acid chain: Dihydroorotate dehydrogenase (quinone) (364 aa).

FMN is bound by residues 61 to 65 and threonine 85; that span reads AGFDK. Residue lysine 65 participates in substrate binding. Residue 110 to 114 participates in substrate binding; the sequence is NRMGF. Residues asparagine 139 and asparagine 170 each contribute to the FMN site. Residue asparagine 170 participates in substrate binding. The Nucleophile role is filled by serine 173. Residue asparagine 175 participates in substrate binding. Residues lysine 214 and alanine 242 each coordinate FMN. 243–244 serves as a coordination point for substrate; it reads NT. FMN contacts are provided by residues glycine 266, glycine 295, and 316 to 317; that span reads YS.

This sequence belongs to the dihydroorotate dehydrogenase family. Type 2 subfamily. In terms of assembly, monomer. Requires FMN as cofactor.

Its subcellular location is the cell membrane. The enzyme catalyses (S)-dihydroorotate + a quinone = orotate + a quinol. It participates in pyrimidine metabolism; UMP biosynthesis via de novo pathway; orotate from (S)-dihydroorotate (quinone route): step 1/1. Functionally, catalyzes the conversion of dihydroorotate to orotate with quinone as electron acceptor. In Rhodopseudomonas palustris (strain HaA2), this protein is Dihydroorotate dehydrogenase (quinone).